Here is a 192-residue protein sequence, read N- to C-terminus: A-type ATP synthase subunit E (192 aa).

This sequence belongs to the V-ATPase E subunit family. As to quaternary structure, has multiple subunits with at least A(3), B(3), C, D, E, F, H, I and proteolipid K(x).

The protein resides in the cell membrane. Component of the A-type ATP synthase that produces ATP from ADP in the presence of a proton gradient across the membrane. This is A-type ATP synthase subunit E from Methanoculleus marisnigri (strain ATCC 35101 / DSM 1498 / JR1).